Here is a 376-residue protein sequence, read N- to C-terminus: Chaperone protein DnaJ (376 aa).

The J domain occupies 5 to 70 (DYYEILGVSK…QKRAAYDQYG (66 aa)). Residues 131 to 209 (GVTKEIRIPT…CHGHGRVERS (79 aa)) form a CR-type zinc finger. 8 residues coordinate Zn(2+): Cys-144, Cys-147, Cys-161, Cys-164, Cys-183, Cys-186, Cys-197, and Cys-200. CXXCXGXG motif repeat units follow at residues 144-151 (CDVCHGSG), 161-168 (CPTCHGSG), 183-190 (CPHCQGRG), and 197-204 (CNKCHGHG).

Belongs to the DnaJ family. In terms of assembly, homodimer. Zn(2+) serves as cofactor.

The protein localises to the cytoplasm. In terms of biological role, participates actively in the response to hyperosmotic and heat shock by preventing the aggregation of stress-denatured proteins and by disaggregating proteins, also in an autonomous, DnaK-independent fashion. Unfolded proteins bind initially to DnaJ; upon interaction with the DnaJ-bound protein, DnaK hydrolyzes its bound ATP, resulting in the formation of a stable complex. GrpE releases ADP from DnaK; ATP binding to DnaK triggers the release of the substrate protein, thus completing the reaction cycle. Several rounds of ATP-dependent interactions between DnaJ, DnaK and GrpE are required for fully efficient folding. Also involved, together with DnaK and GrpE, in the DNA replication of plasmids through activation of initiation proteins. The sequence is that of Chaperone protein DnaJ from Escherichia fergusonii (strain ATCC 35469 / DSM 13698 / CCUG 18766 / IAM 14443 / JCM 21226 / LMG 7866 / NBRC 102419 / NCTC 12128 / CDC 0568-73).